We begin with the raw amino-acid sequence, 450 residues long: SAGA complex/transcription factor TFIID complex subunit Taf12 (450 aa).

Polar residues-rich tracts occupy residues 1-10 (MNGQHSSPGT), 19-29 (PVNQAQFSQQR), and 190-212 (QNRQASSANGNNTGTSTPVNAST). Disordered stretches follow at residues 1-29 (MNGQHSSPGTPVQRPSAGPVNQAQFSQQR) and 190-281 (QNRQ…VEKS). Low complexity predominate over residues 217 to 236 (STASTPQLQQTQAQANAPQQ). Composition is skewed to polar residues over residues 237 to 246 (RINPETSSVP) and 255 to 281 (ANVSNESTELATSATQQSGLANNVEKS). Serine 297 bears the Phosphoserine mark. A Histone-fold domain is found at 338 to 413 (NGNRLLSKRK…HLERNWNIRL (76 aa)). The tract at residues 426-450 (RKTGPTPSYQQKQNAIGTAKSLNKD) is disordered. Positions 430–441 (PTPSYQQKQNAI) are enriched in polar residues.

Belongs to the TAF12 family. In terms of assembly, component of the 1.8 MDa SAGA (Spt-Ada-Gcn5 acetyltransferase) complex, which is composed of 19 subunits tra1, spt7, taf5, ngg1/ada3, sgf73, spt20, spt8, taf12, taf6, hfi1/ada1, ubp8, gcn5, ada2, spt3, sgf29, taf10, taf9, sgf11 and sus1. The SAGA complex is composed of 4 modules, namely the HAT (histone acetyltransferase) module (gcn5, ada2, ngg1/ada3 and sgf29), the DUB (deubiquitinating) module (ubp8, sgf11, sgf73 and sus1), the core or TAF (TBP-associated factor) module (taf5, taf6, taf9, taf10 and taf12), and the Tra1 or SPT (Suppressor of Ty) module (tra1, hfi1/ada1, spt3, spt7, spt8 and spt20). The Tra1/SPT module binds activators, the core module recruits TBP (TATA-binding protein), the HAT module contains the histone H3 acetyltransferase gcn5, and the DUB module comprises the histone H2B deubiquitinase ubp8. Component of the 1.2 MDa TFIID complex, which is composed of TATA-binding protein (TBP) and the 14 TBP-associated factors (TAFs). It comprises 1 copy of each taf1, taf2, taf3, taf7, taf8, taf11, taf13, 2 copies of each taf4, taf5, taf6, taf9, taf10, taf12, and 3 copies of taf14. In TFIID, taf12 heterodimerizes with taf4, forming ultimately an octamer consisting of a taf6-taf9 heterotetramer core flanked by taf4-taf12 dimers on either side, similar to the histone H2A-H2B-H3-H4 octamer.

Its subcellular location is the nucleus. Functions as a component of both the DNA-binding general transcription initiation factor complex TFIID and the transcription coactivator SAGA complex. Binding of TFIID to a promoter (with or without TATA element) is the initial step in pre-initiation complex (PIC) formation. TFIID plays a key role in the regulation of gene expression by RNA polymerase II through different activities such as transcription activator interaction, core promoter recognition and selectivity, TFIIA and TFIIB interaction, chromatin modification (histone acetylation by TAF1), facilitation of DNA opening and initiation of transcription. SAGA acts as a general cofactor required for essentially all RNA polymerase II transcription. At the promoters, SAGA is required for transcription pre-initiation complex (PIC) recruitment. It influences RNA polymerase II transcriptional activity through different activities such as TBP interaction (via core/TAF module) and promoter selectivity, interaction with transcription activators (via Tra1/SPT module), and chromatin modification through histone acetylation (via HAT module) and deubiquitination (via DUB module). SAGA preferentially acetylates histones H3 (to form H3K9ac, H3K14ac, H3K18ac and H3K23ac) and H2B and deubiquitinates histone H2B. SAGA interacts with DNA via upstream activating sequences (UASs). The polypeptide is SAGA complex/transcription factor TFIID complex subunit Taf12 (Schizosaccharomyces pombe (strain 972 / ATCC 24843) (Fission yeast)).